Reading from the N-terminus, the 184-residue chain is Putative manganese efflux pump MntP (184 aa).

A run of 5 helical transmembrane segments spans residues 39–59 (IFGV…LSFV), 65–85 (IDHF…ILEA), 102–122 (LALG…TFSF), 132–152 (LIIG…GKIL), and 161–181 (LVLG…THLV).

This sequence belongs to the MntP (TC 9.B.29) family.

Its subcellular location is the cell inner membrane. Functionally, probably functions as a manganese efflux pump. This Campylobacter curvus (strain 525.92) protein is Putative manganese efflux pump MntP.